Consider the following 410-residue polypeptide: Chaperone protein dnaJ 15 (410 aa).

A J domain is found at 17 to 82; sequence DPYEVLCVSK…EKRRHYDNAG (66 aa). Residues 284-344 are a coiled coil; it reads AKTYEDTTEK…TVDELLKQRD (61 aa). The tract at residues 351–410 is disordered; sequence SVVKTPSGNNLSNGSSSKAQGDESKGDGDSAGEEGGTENRDKSKRKWFNLNLKGSDKKLG. Residues 357-367 are compositionally biased toward low complexity; sequence SGNNLSNGSSS.

Belongs to the DnaJ family. B/II subfamily. Expressed at high levels in root cap, root tip meristematic region and elongation zones, and at lower levels in mature part of roots (at protein level). Constitutively expressed in seedlings, etiolated or not, roots, rosette leaves, cauline leaves, stems, flowers, siliques and pollen.

The protein resides in the cytoplasm. The protein localises to the cytoskeleton. It is found in the endoplasmic reticulum membrane. Its subcellular location is the golgi apparatus membrane. In terms of biological role, plays a continuous role in plant development probably in the structural organization of compartments. Seems to be involved in early gravitropic signal transduction within the gravity-perceiving cells (statocytes), where it influences pH changes and auxin distribution. Probably affects the localization and/or activity of auxin efflux carrier components (PIN proteins) or other proteins involved in lateral auxin transport. This Arabidopsis thaliana (Mouse-ear cress) protein is Chaperone protein dnaJ 15 (ATJ15).